The following is a 356-amino-acid chain: Holliday junction branch migration complex subunit RuvB (356 aa).

The tract at residues 4-191 is large ATPase domain (RuvB-L); that stretch reads TDKLATEQRI…FGIVARLEFY (188 aa). ATP contacts are provided by residues Leu30, Arg31, Gly72, Lys75, Thr76, Thr77, 138–140, Arg181, Tyr191, and Arg228; that span reads EDY. Position 76 (Thr76) interacts with Mg(2+). Residues 192–262 are small ATPAse domain (RuvB-S); that stretch reads DAEQLSRIVR…VADAALAMLD (71 aa). Residues 265–356 form a head domain (RuvB-H) region; that stretch reads PVGFDLMDRK…RDEWDTPDGK (92 aa). The DNA site is built by Arg301, Arg320, and Arg325.

It belongs to the RuvB family. As to quaternary structure, homohexamer. Forms an RuvA(8)-RuvB(12)-Holliday junction (HJ) complex. HJ DNA is sandwiched between 2 RuvA tetramers; dsDNA enters through RuvA and exits via RuvB. An RuvB hexamer assembles on each DNA strand where it exits the tetramer. Each RuvB hexamer is contacted by two RuvA subunits (via domain III) on 2 adjacent RuvB subunits; this complex drives branch migration. In the full resolvosome a probable DNA-RuvA(4)-RuvB(12)-RuvC(2) complex forms which resolves the HJ.

It localises to the cytoplasm. It catalyses the reaction ATP + H2O = ADP + phosphate + H(+). In terms of biological role, the RuvA-RuvB-RuvC complex processes Holliday junction (HJ) DNA during genetic recombination and DNA repair, while the RuvA-RuvB complex plays an important role in the rescue of blocked DNA replication forks via replication fork reversal (RFR). RuvA specifically binds to HJ cruciform DNA, conferring on it an open structure. The RuvB hexamer acts as an ATP-dependent pump, pulling dsDNA into and through the RuvAB complex. RuvB forms 2 homohexamers on either side of HJ DNA bound by 1 or 2 RuvA tetramers; 4 subunits per hexamer contact DNA at a time. Coordinated motions by a converter formed by DNA-disengaged RuvB subunits stimulates ATP hydrolysis and nucleotide exchange. Immobilization of the converter enables RuvB to convert the ATP-contained energy into a lever motion, pulling 2 nucleotides of DNA out of the RuvA tetramer per ATP hydrolyzed, thus driving DNA branch migration. The RuvB motors rotate together with the DNA substrate, which together with the progressing nucleotide cycle form the mechanistic basis for DNA recombination by continuous HJ branch migration. Branch migration allows RuvC to scan DNA until it finds its consensus sequence, where it cleaves and resolves cruciform DNA. The polypeptide is Holliday junction branch migration complex subunit RuvB (Burkholderia cenocepacia (strain HI2424)).